A 258-amino-acid polypeptide reads, in one-letter code: UPF0246 protein NTHI1156 (258 aa).

Belongs to the UPF0246 family.

This chain is UPF0246 protein NTHI1156, found in Haemophilus influenzae (strain 86-028NP).